Consider the following 83-residue polypeptide: Short neurotoxin OKI-Ed (83 aa).

The first 21 residues, 1-21, serve as a signal peptide directing secretion; the sequence is MKTLLLTLVVVTIVCLDLGYT. Intrachain disulfides connect C24–C45, C38–C62, C64–C75, and C76–C81.

The protein belongs to the three-finger toxin family. Short-chain subfamily. Type I alpha-neurotoxin sub-subfamily. As to expression, expressed by the venom gland.

It is found in the secreted. Binds to muscle nicotinic acetylcholine receptor (nAChR) and inhibit acetylcholine from binding to the receptor, thereby impairing neuromuscular transmission. The sequence is that of Short neurotoxin OKI-Ed from Laticauda semifasciata (Black-banded sea krait).